Here is a 328-residue protein sequence, read N- to C-terminus: Arabinose 5-phosphate isomerase KdsD (328 aa).

The SIS domain maps to 42 to 184 (CEKMFWCKGK…AVALLKARGF (143 aa)). Substrate-binding positions include 75–76 (GT), histidine 82, histidine 88, 114–123 (ALIPVLKRLH), 148–150 (KVA), threonine 222, and aspartate 275. Histidine 82 provides a ligand contact to Zn(2+). The region spanning 210 to 268 (MHTGDEIPHVKKTASLRDALLEVTRKNLGMTVICDDNMMIEGIFTDGDLRRVFDMGVDV) is the CBS 1 domain. The CBS 2 domain maps to 277 to 328 (MTPGGIRVRPGILAVEALNLMQSRHITSVMVADGDHLLGVLHMHDLLRAGVV).

The protein belongs to the SIS family. GutQ/KpsF subfamily. Homotetramer.

It catalyses the reaction D-arabinose 5-phosphate = D-ribulose 5-phosphate. It participates in carbohydrate biosynthesis; 3-deoxy-D-manno-octulosonate biosynthesis; 3-deoxy-D-manno-octulosonate from D-ribulose 5-phosphate: step 1/3. Its pathway is bacterial outer membrane biogenesis; lipopolysaccharide biosynthesis. Its function is as follows. Involved in the biosynthesis of 3-deoxy-D-manno-octulosonate (KDO), a unique 8-carbon sugar component of lipopolysaccharides (LPSs). Catalyzes the reversible aldol-ketol isomerization between D-ribulose 5-phosphate (Ru5P) and D-arabinose 5-phosphate (A5P). The polypeptide is Arabinose 5-phosphate isomerase KdsD (kdsD) (Shigella flexneri).